A 354-amino-acid chain; its full sequence is Rhodopsin (354 aa).

The Extracellular segment spans residues 1–36 (MNGTEGPYFYIPMVNTTGIVRSPYEYPQYYLVNPAA). Asparagine 2 and asparagine 15 each carry an N-linked (GlcNAc...) asparagine glycan. Residues 37-61 (YAALGAYMFFLILLGFPINFLTLYV) form a helical membrane-spanning segment. At 62-73 (TLEHKKLRTPLN) the chain is on the cytoplasmic side. A helical membrane pass occupies residues 74–96 (YILLNLAVADLFMVFGGFTTTMY). At 97 to 110 (TSMHGYFVLGRLGC) the chain is on the extracellular side. Cysteine 110 and cysteine 187 are oxidised to a cystine. A helical transmembrane segment spans residues 111–133 (NLEGFFATLGGEIGLWSLVVLAI). A 'Ionic lock' involved in activated form stabilization motif is present at residues 134-136 (ERW). The Cytoplasmic segment spans residues 134 to 152 (ERWVVVCKPISNFRFGENH). A helical membrane pass occupies residues 153 to 173 (AIMGLAFTWIMACACAVPPLV). Topologically, residues 174–202 (GWSRYIPEGMQCSCGVDYYTRAEGFNNES) are extracellular. Asparagine 200 is a glycosylation site (N-linked (GlcNAc...) asparagine). The helical transmembrane segment at 203 to 224 (FVVYMFTCHFCIPLTIIGFCYG) threads the bilayer. At 225–252 (RLLCAVKEAAAAQQESETTQRAEREVTR) the chain is on the cytoplasmic side. A helical transmembrane segment spans residues 253–274 (MVILMVVGFLVCWLPYASVAWY). The Extracellular segment spans residues 275–286 (IFSNQGSQFGPL). The chain crosses the membrane as a helical span at residues 287–308 (FMTIPAFFAKSSSVYNPMIYIC). Position 296 is an N6-(retinylidene)lysine (lysine 296). Residues 309–354 (MNKQFRHCMITTLCCGKNPFEEEEGASTTASKTEASSVSSSSVSPA) lie on the Cytoplasmic side of the membrane. Residues cysteine 322 and cysteine 323 are each lipidated (S-palmitoyl cysteine). Positions 333–354 (GASTTASKTEASSVSSSSVSPA) are disordered. Positions 334–354 (ASTTASKTEASSVSSSSVSPA) are enriched in low complexity.

Belongs to the G-protein coupled receptor 1 family. Opsin subfamily. In terms of processing, phosphorylated on some or all of the serine and threonine residues present in the C-terminal region. Post-translationally, contains one covalently linked retinal chromophore.

It localises to the membrane. Its subcellular location is the cell projection. It is found in the cilium. The protein localises to the photoreceptor outer segment. Functionally, photoreceptor required for image-forming vision at low light intensity. While most salt water fish species use retinal as chromophore, most freshwater fish use 3-dehydroretinal, or a mixture of retinal and 3-dehydroretinal. Light-induced isomerization of 11-cis to all-trans retinal triggers a conformational change that activates signaling via G-proteins. Subsequent receptor phosphorylation mediates displacement of the bound G-protein alpha subunit by arrestin and terminates signaling. This Salaria pavo (Peacock blenny) protein is Rhodopsin (rho).